The following is a 392-amino-acid chain: 1-deoxy-D-xylulose 5-phosphate reductoisomerase (392 aa).

Residues Thr10, Gly11, Ser12, Ile13, Asn38, and Asn124 each contribute to the NADPH site. Lys125 serves as a coordination point for 1-deoxy-D-xylulose 5-phosphate. Glu126 contributes to the NADPH binding site. Asp150 contributes to the Mn(2+) binding site. Residues Ser151, Glu152, Ser176, and His199 each coordinate 1-deoxy-D-xylulose 5-phosphate. Glu152 contributes to the Mn(2+) binding site. Residue Gly205 coordinates NADPH. 1-deoxy-D-xylulose 5-phosphate-binding residues include Ser212, Asn217, Lys218, and Glu221. Glu221 provides a ligand contact to Mn(2+).

It belongs to the DXR family. The cofactor is Mg(2+). Mn(2+) is required as a cofactor.

It catalyses the reaction 2-C-methyl-D-erythritol 4-phosphate + NADP(+) = 1-deoxy-D-xylulose 5-phosphate + NADPH + H(+). It functions in the pathway isoprenoid biosynthesis; isopentenyl diphosphate biosynthesis via DXP pathway; isopentenyl diphosphate from 1-deoxy-D-xylulose 5-phosphate: step 1/6. Its function is as follows. Catalyzes the NADPH-dependent rearrangement and reduction of 1-deoxy-D-xylulose-5-phosphate (DXP) to 2-C-methyl-D-erythritol 4-phosphate (MEP). The sequence is that of 1-deoxy-D-xylulose 5-phosphate reductoisomerase from Synechococcus sp. (strain JA-2-3B'a(2-13)) (Cyanobacteria bacterium Yellowstone B-Prime).